A 370-amino-acid polypeptide reads, in one-letter code: Phosphate acyltransferase (370 aa).

This sequence belongs to the PlsX family. Homodimer. Probably interacts with PlsY.

Its subcellular location is the cytoplasm. It carries out the reaction a fatty acyl-[ACP] + phosphate = an acyl phosphate + holo-[ACP]. It functions in the pathway lipid metabolism; phospholipid metabolism. Functionally, catalyzes the reversible formation of acyl-phosphate (acyl-PO(4)) from acyl-[acyl-carrier-protein] (acyl-ACP). This enzyme utilizes acyl-ACP as fatty acyl donor, but not acyl-CoA. This chain is Phosphate acyltransferase, found in Paracoccus denitrificans (strain Pd 1222).